The primary structure comprises 165 residues: Disulfide bond formation protein B (165 aa).

The Cytoplasmic portion of the chain corresponds to 1 to 10; sequence MPAWLTNRTI. The helical transmembrane segment at 11-27 threads the bilayer; the sequence is YFLCFLAIAGLMGFAFY. The Periplasmic segment spans residues 28–45; that stretch reads LQYVKDLEPCPLCMAQRI. Cys-37 and Cys-40 are oxidised to a cystine. Residues 46–62 form a helical membrane-spanning segment; the sequence is AFVLAGLVFLAAALHNP. Over 63–68 the chain is Cytoplasmic; that stretch reads KNTGTT. The helical transmembrane segment at 69–86 threads the bilayer; it reads VYAFLGWVTTLGGAALAT. Residues 87–143 are Periplasmic-facing; sequence RQLWLQSLPADQVPACGPGLEYMLEAFPFSEVLTMMLTGTGECAEVQWTFLGLSIPG. The cysteines at positions 102 and 129 are disulfide-linked. Residues 144–162 form a helical membrane-spanning segment; it reads WTLVAFIGFTAVWAFAWVR. Over 163–165 the chain is Cytoplasmic; that stretch reads RPR.

It belongs to the DsbB family.

The protein resides in the cell inner membrane. Its function is as follows. Required for disulfide bond formation in some periplasmic proteins. Acts by oxidizing the DsbA protein. This is Disulfide bond formation protein B from Hahella chejuensis (strain KCTC 2396).